Here is a 351-residue protein sequence, read N- to C-terminus: MAAPLKVCIVGSGNWGSAIARIIGSNAQKLQCFATTVKMWVYEEMVNGKKLSEIINTEHENVKYLPGYKLPENVVAVPQLRDAADGADLLVFVVPHQFIRKLCDEMMGCVSERARGITLIKGIDEGPEGLKLISDIIREKMGIDVSVLMGANIANEVAAEKFCESTIGSKVLENGLLFKDLLQTPNFRITVVDDADTVELCGALKNIVAVGAGFCDGLQCGDNTKAAVIRLGLMEMIAFAKLFSKDDSVSSATFLESCGVADLITTCYGGRNRRVAEAFAKTGKSIEELEKEMLNGQKLQGPLTSAEVYHILKQKGLVEKFPLFTAVYQICFEDKPVRDMITCLQSHPEHL.

11-16 (GSGNWG) is a binding site for NAD(+). Lys-121 serves as a coordination point for substrate. Ala-154 contributes to the NAD(+) binding site. The active-site Proton acceptor is Lys-205. Residues Arg-271, Lys-298, and Gln-300 each coordinate NAD(+). 271 to 272 (RN) is a binding site for substrate.

Belongs to the NAD-dependent glycerol-3-phosphate dehydrogenase family.

It localises to the cytoplasm. The catalysed reaction is sn-glycerol 3-phosphate + NAD(+) = dihydroxyacetone phosphate + NADH + H(+). Plays a role in regulating cardiac sodium current. This is Glycerol-3-phosphate dehydrogenase 1-like protein (gpd1l) from Danio rerio (Zebrafish).